We begin with the raw amino-acid sequence, 393 residues long: CCA-adding enzyme (393 aa).

Residues G27 and R30 each contribute to the ATP site. CTP-binding residues include G27 and R30. Positions 40 and 42 each coordinate Mg(2+). ATP-binding residues include R111, D154, R157, R160, and R163. The CTP site is built by R111, D154, R157, R160, and R163.

The protein belongs to the tRNA nucleotidyltransferase/poly(A) polymerase family. Bacterial CCA-adding enzyme type 3 subfamily. In terms of assembly, homodimer. Requires Mg(2+) as cofactor.

The catalysed reaction is a tRNA precursor + 2 CTP + ATP = a tRNA with a 3' CCA end + 3 diphosphate. It catalyses the reaction a tRNA with a 3' CCA end + 2 CTP + ATP = a tRNA with a 3' CCACCA end + 3 diphosphate. Catalyzes the addition and repair of the essential 3'-terminal CCA sequence in tRNAs without using a nucleic acid template. Adds these three nucleotides in the order of C, C, and A to the tRNA nucleotide-73, using CTP and ATP as substrates and producing inorganic pyrophosphate. tRNA 3'-terminal CCA addition is required both for tRNA processing and repair. Also involved in tRNA surveillance by mediating tandem CCA addition to generate a CCACCA at the 3' terminus of unstable tRNAs. While stable tRNAs receive only 3'-terminal CCA, unstable tRNAs are marked with CCACCA and rapidly degraded. In Listeria monocytogenes serotype 4b (strain CLIP80459), this protein is CCA-adding enzyme.